The sequence spans 345 residues: NADH-quinone oxidoreductase subunit H (345 aa).

8 helical membrane-spanning segments follow: residues Val13–Leu33, Phe84–Phe104, Val115–Gly135, Leu161–Val181, Phe190–Leu210, Tyr248–Ser268, Val277–Ile297, and Leu309–Ala329.

Belongs to the complex I subunit 1 family. NDH-1 is composed of 14 different subunits. Subunits NuoA, H, J, K, L, M, N constitute the membrane sector of the complex.

The protein localises to the cell inner membrane. The enzyme catalyses a quinone + NADH + 5 H(+)(in) = a quinol + NAD(+) + 4 H(+)(out). Functionally, NDH-1 shuttles electrons from NADH, via FMN and iron-sulfur (Fe-S) centers, to quinones in the respiratory chain. The immediate electron acceptor for the enzyme in this species is believed to be ubiquinone. Couples the redox reaction to proton translocation (for every two electrons transferred, four hydrogen ions are translocated across the cytoplasmic membrane), and thus conserves the redox energy in a proton gradient. This subunit may bind ubiquinone. This Roseobacter denitrificans (strain ATCC 33942 / OCh 114) (Erythrobacter sp. (strain OCh 114)) protein is NADH-quinone oxidoreductase subunit H.